A 187-amino-acid polypeptide reads, in one-letter code: Elongation factor P (187 aa).

This sequence belongs to the elongation factor P family.

The protein localises to the cytoplasm. It participates in protein biosynthesis; polypeptide chain elongation. Its function is as follows. Involved in peptide bond synthesis. Stimulates efficient translation and peptide-bond synthesis on native or reconstituted 70S ribosomes in vitro. Probably functions indirectly by altering the affinity of the ribosome for aminoacyl-tRNA, thus increasing their reactivity as acceptors for peptidyl transferase. This chain is Elongation factor P, found in Rhodococcus jostii (strain RHA1).